A 358-amino-acid polypeptide reads, in one-letter code: MIAISPDRLAAIIARREELQAEMARPDLDSNRLVALSREYSEVEPVALAAENVGRLREEGETLEAMTKDDDPELQAMAVEELEANKTALAEAERALALSLLPRDAADERSAILEIRAGTGGDEAALFGGDLLRMYSRYAEEHGWRVEMISASAAELGGYKEVVISITGAGVFARLKFESGVHRVQRVPVTESGGRIHTSAATVAVLPEAEEVDVDIDERDLRIDIFRSSGPGGQSVNTTDSAVRITHIPSGIVVSQQDEKSQHKNKAKAMKVLRARLYERERERLHSERAGQRKSMVGSGDRSERIRTYNFPQGRVTDHRINLTLHRLPEILAGPGLDEVISALIAEDEAERLASLDD.

Gln234 carries the post-translational modification N5-methylglutamine. The tract at residues 283–306 (ERLHSERAGQRKSMVGSGDRSERI) is disordered.

This sequence belongs to the prokaryotic/mitochondrial release factor family. In terms of processing, methylated by PrmC. Methylation increases the termination efficiency of RF1.

It localises to the cytoplasm. Peptide chain release factor 1 directs the termination of translation in response to the peptide chain termination codons UAG and UAA. The sequence is that of Peptide chain release factor 1 from Zymomonas mobilis subsp. mobilis (strain ATCC 31821 / ZM4 / CP4).